The following is a 257-amino-acid chain: MALAKRIIPCLDVTAGRVVKGVNFVELRDAGDPVEIARRYDDQGADELTFLDITATSDQRDLILPIIEAVASQVFIPLTVGGGVRAVEDVRRLLNAGADKVSMNSSAVANPQLVRDAADKYGSQCIVVAIDAKRVSADGETPRWEVFTHGGRKNTGLDAIEWARKMAELGAGEILLTSMDRDGTKSGFDLALTRGVSDAVPVPVIASGGVGSLQHLADGIKDGRADAVLAASIFHYGEHTVGEAKRFMSDQGIPVRL.

Residues aspartate 12 and aspartate 131 contribute to the active site.

It belongs to the HisA/HisF family. Heterodimer of HisH and HisF.

Its subcellular location is the cytoplasm. It catalyses the reaction 5-[(5-phospho-1-deoxy-D-ribulos-1-ylimino)methylamino]-1-(5-phospho-beta-D-ribosyl)imidazole-4-carboxamide + L-glutamine = D-erythro-1-(imidazol-4-yl)glycerol 3-phosphate + 5-amino-1-(5-phospho-beta-D-ribosyl)imidazole-4-carboxamide + L-glutamate + H(+). It functions in the pathway amino-acid biosynthesis; L-histidine biosynthesis; L-histidine from 5-phospho-alpha-D-ribose 1-diphosphate: step 5/9. Functionally, IGPS catalyzes the conversion of PRFAR and glutamine to IGP, AICAR and glutamate. The HisF subunit catalyzes the cyclization activity that produces IGP and AICAR from PRFAR using the ammonia provided by the HisH subunit. The chain is Imidazole glycerol phosphate synthase subunit HisF from Burkholderia orbicola (strain MC0-3).